We begin with the raw amino-acid sequence, 74 residues long: UPF0435 protein GWCH70_0415 (74 aa).

Belongs to the UPF0435 family.

This chain is UPF0435 protein GWCH70_0415, found in Geobacillus sp. (strain WCH70).